Consider the following 266-residue polypeptide: UPF0294 protein YafD (266 aa).

Belongs to the UPF0294 family.

The protein localises to the cytoplasm. The sequence is that of UPF0294 protein YafD from Salmonella newport (strain SL254).